The chain runs to 192 residues: Xanthine phosphoribosyltransferase (192 aa).

Xanthine contacts are provided by Leu-20 and Asn-27. 128–132 (ANGDA) serves as a coordination point for 5-phospho-alpha-D-ribose 1-diphosphate. Xanthine is bound at residue Lys-156.

This sequence belongs to the purine/pyrimidine phosphoribosyltransferase family. Xpt subfamily. As to quaternary structure, homodimer.

The protein localises to the cytoplasm. The catalysed reaction is XMP + diphosphate = xanthine + 5-phospho-alpha-D-ribose 1-diphosphate. It participates in purine metabolism; XMP biosynthesis via salvage pathway; XMP from xanthine: step 1/1. In terms of biological role, converts the preformed base xanthine, a product of nucleic acid breakdown, to xanthosine 5'-monophosphate (XMP), so it can be reused for RNA or DNA synthesis. The protein is Xanthine phosphoribosyltransferase of Staphylococcus epidermidis (strain ATCC 35984 / DSM 28319 / BCRC 17069 / CCUG 31568 / BM 3577 / RP62A).